We begin with the raw amino-acid sequence, 618 residues long: Delta-like protein 3 (618 aa).

A signal peptide spans 1-26 (MVSPRMSGLLSQTVILALIFLPQTRP). Over 27–492 (AGVFELQIHS…LRPGDPQRYL (466 aa)) the chain is Extracellular. One can recognise a DSL domain in the interval 176–215 (ARCEPPAVGTACTRLCRPRSAPSRCGPGLRPCAPLEDECE). 6 consecutive EGF-like domains span residues 216–249 (APLV…PLCT), 274–310 (GPGP…LRCE), 312–351 (SGVT…SNCE), 353–389 (RVDR…PRCE), 391–427 (DLDD…RDCR), and 429–465 (RADP…ARCE). 18 cysteine pairs are disulfide-bonded: Cys-220–Cys-231, Cys-224–Cys-237, Cys-239–Cys-248, Cys-278–Cys-289, Cys-283–Cys-298, Cys-300–Cys-309, Cys-316–Cys-327, Cys-321–Cys-339, Cys-341–Cys-350, Cys-357–Cys-368, Cys-362–Cys-377, Cys-379–Cys-388, Cys-395–Cys-406, Cys-400–Cys-415, Cys-417–Cys-426, Cys-433–Cys-444, Cys-438–Cys-453, and Cys-455–Cys-464. Residues 493 to 513 (LPPALGLLVAAGVAGAALLLV) form a helical membrane-spanning segment. Residues 514 to 618 (HVRRRGHSQD…PYPSSILSVK (105 aa)) lie on the Cytoplasmic side of the membrane. Residues 546–562 (NLRTQEGSGDGPSSSVD) show a composition bias toward polar residues. The segment at 546-566 (NLRTQEGSGDGPSSSVDWNRP) is disordered.

In terms of assembly, can bind and activate Notch-1 or another Notch receptor. Ubiquitinated by MIB (MIB1 or MIB2), leading to its endocytosis and subsequent degradation.

The protein localises to the membrane. Functionally, inhibits primary neurogenesis. May be required to divert neurons along a specific differentiation pathway. Plays a role in the formation of somite boundaries during segmentation of the paraxial mesoderm. The protein is Delta-like protein 3 (DLL3) of Homo sapiens (Human).